The following is a 333-amino-acid chain: Ketol-acid reductoisomerase (NADP(+)) (333 aa).

The KARI N-terminal Rossmann domain occupies methionine 1 to threonine 179. Residues tyrosine 22–glutamine 25, lysine 45, serine 48, serine 50, and aspartate 80–glutamine 83 contribute to the NADP(+) site. Residue histidine 105 is part of the active site. Glycine 131 contributes to the NADP(+) binding site. A KARI C-terminal knotted domain is found at threonine 180 to valine 325. The Mg(2+) site is built by aspartate 188, glutamate 192, glutamate 224, and glutamate 228. Serine 249 is a substrate binding site.

It belongs to the ketol-acid reductoisomerase family. The cofactor is Mg(2+).

The catalysed reaction is (2R)-2,3-dihydroxy-3-methylbutanoate + NADP(+) = (2S)-2-acetolactate + NADPH + H(+). It carries out the reaction (2R,3R)-2,3-dihydroxy-3-methylpentanoate + NADP(+) = (S)-2-ethyl-2-hydroxy-3-oxobutanoate + NADPH + H(+). Its pathway is amino-acid biosynthesis; L-isoleucine biosynthesis; L-isoleucine from 2-oxobutanoate: step 2/4. It functions in the pathway amino-acid biosynthesis; L-valine biosynthesis; L-valine from pyruvate: step 2/4. Functionally, involved in the biosynthesis of branched-chain amino acids (BCAA). Catalyzes an alkyl-migration followed by a ketol-acid reduction of (S)-2-acetolactate (S2AL) to yield (R)-2,3-dihydroxy-isovalerate. In the isomerase reaction, S2AL is rearranged via a Mg-dependent methyl migration to produce 3-hydroxy-3-methyl-2-ketobutyrate (HMKB). In the reductase reaction, this 2-ketoacid undergoes a metal-dependent reduction by NADPH to yield (R)-2,3-dihydroxy-isovalerate. This Mycobacterium avium (strain 104) protein is Ketol-acid reductoisomerase (NADP(+)).